The primary structure comprises 950 residues: Bifunctional glutamine synthetase adenylyltransferase/adenylyl-removing enzyme (950 aa).

The segment at 1–443 (MSLPSPLIPV…VFVTLIGDEE (443 aa)) is adenylyl removase. Residues 450-950 (ERHFNELWDM…WQEWLESSTI (501 aa)) are adenylyl transferase.

This sequence belongs to the GlnE family. The cofactor is Mg(2+).

It carries out the reaction [glutamine synthetase]-O(4)-(5'-adenylyl)-L-tyrosine + phosphate = [glutamine synthetase]-L-tyrosine + ADP. It catalyses the reaction [glutamine synthetase]-L-tyrosine + ATP = [glutamine synthetase]-O(4)-(5'-adenylyl)-L-tyrosine + diphosphate. Its function is as follows. Involved in the regulation of glutamine synthetase GlnA, a key enzyme in the process to assimilate ammonia. When cellular nitrogen levels are high, the C-terminal adenylyl transferase (AT) inactivates GlnA by covalent transfer of an adenylyl group from ATP to specific tyrosine residue of GlnA, thus reducing its activity. Conversely, when nitrogen levels are low, the N-terminal adenylyl removase (AR) activates GlnA by removing the adenylyl group by phosphorolysis, increasing its activity. The regulatory region of GlnE binds the signal transduction protein PII (GlnB) which indicates the nitrogen status of the cell. This Vibrio vulnificus (strain CMCP6) protein is Bifunctional glutamine synthetase adenylyltransferase/adenylyl-removing enzyme.